We begin with the raw amino-acid sequence, 37 residues long: Large ribosomal subunit protein bL36c (37 aa).

Belongs to the bacterial ribosomal protein bL36 family.

The protein resides in the plastid. Its subcellular location is the chloroplast. This chain is Large ribosomal subunit protein bL36c, found in Tupiella akineta (Green alga).